A 123-amino-acid polypeptide reads, in one-letter code: MVQWKTLTKRSQGANFEQKAREFLERNGLKFIAANQQFKCGELDLIMRQGDTFVFVEVRQRKSNRFGSAVESIDYRKQQKWLDAANMWLFTRHKQSLDTANCRFDVVAFEGNDPPLWIPNFLG.

This sequence belongs to the UPF0102 family.

This is UPF0102 protein APP7_1414 from Actinobacillus pleuropneumoniae serotype 7 (strain AP76).